The sequence spans 58 residues: Conotoxin Ar5.4 (58 aa).

Positions 1-20 (RIQSDLIRAALEDADMKNEK) are excised as a propeptide.

It belongs to the conotoxin T superfamily. Post-translationally, contains 2 disulfide bonds that can be either 'C1-C3, C2-C4' or 'C1-C4, C2-C3', since these disulfide connectivities have been observed for conotoxins with cysteine framework V (for examples, see AC P0DQQ7 and AC P81755). Expressed by the venom duct.

The protein localises to the secreted. In Conus arenatus (Sand-dusted cone), this protein is Conotoxin Ar5.4.